A 248-amino-acid chain; its full sequence is MSNGKLILLRHGQSQWNSTNQFTGWVDVDLTEKGEAEAKRGGELIKEKGLHPEVLYTSLLRRAIRTADIALNAADRLWIPVIRDWRLNERHYGALQGLNKADTKEKYGNEKFMAWRRSYDTRPPELEDGAEYSQSDDPRYANLDSVPKTECLKDVVARFVPYFKEEILPRAQKGQTVLIAAHGNSLRALVKHLDNISDDDIAGLNIPTGIPLVYEIAEDGSVVNPGGTYLDPEAAAAGAAAVANQGSK.

Substrate is bound by residues 10–17 (RHGQSQWN), 23–24 (TG), Arg62, 89–92 (ERHY), Lys100, 116–117 (RR), and 183–184 (GN). His11 serves as the catalytic Tele-phosphohistidine intermediate. Residue Glu89 is the Proton donor/acceptor of the active site.

Belongs to the phosphoglycerate mutase family. BPG-dependent PGAM subfamily.

It carries out the reaction (2R)-2-phosphoglycerate = (2R)-3-phosphoglycerate. The protein operates within carbohydrate degradation; glycolysis; pyruvate from D-glyceraldehyde 3-phosphate: step 3/5. Its function is as follows. Catalyzes the interconversion of 2-phosphoglycerate and 3-phosphoglycerate. The chain is 2,3-bisphosphoglycerate-dependent phosphoglycerate mutase from Corynebacterium kroppenstedtii (strain DSM 44385 / JCM 11950 / CIP 105744 / CCUG 35717).